The primary structure comprises 565 residues: Sulfite reductase [NADPH] hemoprotein beta-component (565 aa).

[4Fe-4S] cluster contacts are provided by C429, C435, C474, and C478. Residue C478 participates in siroheme binding.

Belongs to the nitrite and sulfite reductase 4Fe-4S domain family. As to quaternary structure, alpha(8)-beta(8). The alpha component is a flavoprotein, the beta component is a hemoprotein. Siroheme serves as cofactor. The cofactor is [4Fe-4S] cluster.

The enzyme catalyses hydrogen sulfide + 3 NADP(+) + 3 H2O = sulfite + 3 NADPH + 4 H(+). It participates in sulfur metabolism; hydrogen sulfide biosynthesis; hydrogen sulfide from sulfite (NADPH route): step 1/1. Its function is as follows. Component of the sulfite reductase complex that catalyzes the 6-electron reduction of sulfite to sulfide. This is one of several activities required for the biosynthesis of L-cysteine from sulfate. The chain is Sulfite reductase [NADPH] hemoprotein beta-component from Shewanella baltica (strain OS223).